A 104-amino-acid chain; its full sequence is Disrupted in renal carcinoma protein 1 (104 aa).

The disordered stretch occupies residues 1–23 (MPEAHMQPAKLQTSLPTTDHGSK). Positions 10 to 19 (KLQTSLPTTD) are enriched in polar residues.

As to expression, expressed at low steady-state level in adult placenta, testis, ovary, prostate, fetal kidney, spleen and skeletal muscle.

In Homo sapiens (Human), this protein is Disrupted in renal carcinoma protein 1 (DIRC1).